We begin with the raw amino-acid sequence, 325 residues long: Isoaspartyl peptidase/L-asparaginase (325 aa).

Thr193 serves as the catalytic Nucleophile. Substrate contacts are provided by residues 221 to 224 and 243 to 246; these read RIGD and TGKG.

It belongs to the Ntn-hydrolase family. As to quaternary structure, heterotetramer of two alpha and two beta chains arranged as a dimer of alpha/beta heterodimers. Post-translationally, cleaved into an alpha and beta chain by autocatalysis; this activates the enzyme. The N-terminal residue of the beta subunit is responsible for the nucleophile hydrolase activity. Developing seeds.

The catalysed reaction is Cleavage of a beta-linked Asp residue from the N-terminus of a polypeptide.. Functionally, acts in asparagine catabolism but also in the final steps of protein degradation via hydrolysis of a range of isoaspartyl dipeptides. This chain is Isoaspartyl peptidase/L-asparaginase, found in Lupinus angustifolius (Narrow-leaved blue lupine).